The primary structure comprises 445 residues: Probable phosphoglucosamine mutase (445 aa).

Residue Ser99 is the Phosphoserine intermediate of the active site. Residues Ser99, Asp238, Asp240, and Asp242 each coordinate Mg(2+). At Ser99 the chain carries Phosphoserine.

Belongs to the phosphohexose mutase family. Mg(2+) serves as cofactor. In terms of processing, activated by phosphorylation.

It carries out the reaction alpha-D-glucosamine 1-phosphate = D-glucosamine 6-phosphate. Catalyzes the conversion of glucosamine-6-phosphate to glucosamine-1-phosphate. The chain is Probable phosphoglucosamine mutase from Methanobrevibacter smithii (strain ATCC 35061 / DSM 861 / OCM 144 / PS).